We begin with the raw amino-acid sequence, 917 residues long: Isoleucine--tRNA ligase (917 aa).

The 'HIGH' region motif lies at 57–67; the sequence is PYANGNLHMGH. Residue glutamate 554 coordinates L-isoleucyl-5'-AMP. Residues 595–599 carry the 'KMSKS' region motif; it reads KMSKS. ATP is bound at residue lysine 598. Cysteine 886, cysteine 889, cysteine 906, and cysteine 909 together coordinate Zn(2+).

Belongs to the class-I aminoacyl-tRNA synthetase family. IleS type 1 subfamily. As to quaternary structure, monomer. The cofactor is Zn(2+).

It localises to the cytoplasm. The catalysed reaction is tRNA(Ile) + L-isoleucine + ATP = L-isoleucyl-tRNA(Ile) + AMP + diphosphate. Its function is as follows. Catalyzes the attachment of isoleucine to tRNA(Ile). As IleRS can inadvertently accommodate and process structurally similar amino acids such as valine, to avoid such errors it has two additional distinct tRNA(Ile)-dependent editing activities. One activity is designated as 'pretransfer' editing and involves the hydrolysis of activated Val-AMP. The other activity is designated 'posttransfer' editing and involves deacylation of mischarged Val-tRNA(Ile). The chain is Isoleucine--tRNA ligase (ileS) from Staphylococcus aureus (strain MSSA476).